The sequence spans 727 residues: Long-chain-fatty-acid--[acyl-carrier-protein] ligase AEE15, chloroplastic (727 aa).

A chloroplast-targeting transit peptide spans 1–66 (MQIRLKPDYS…PSFRRFRVHC (66 aa)).

It belongs to the ATP-dependent AMP-binding enzyme family.

Its subcellular location is the plastid. It is found in the chloroplast. The enzyme catalyses a long-chain fatty acid + holo-[ACP] + ATP = a long-chain fatty acyl-[ACP] + AMP + diphosphate. Functionally, probably involved in the activation of fatty acids to acyl-carrier-protein prior to fatty acid elongation in plastids. Acts on medium- to long-chain fatty acids. The chain is Long-chain-fatty-acid--[acyl-carrier-protein] ligase AEE15, chloroplastic (AAE15) from Arabidopsis thaliana (Mouse-ear cress).